A 296-amino-acid polypeptide reads, in one-letter code: Complex I intermediate-associated protein 30, mitochondrial (296 aa).

The transit peptide at 1–29 (MNSLLRQGLRLGCCLPAVQQQIHTTAVHR) directs the protein to the mitochondrion.

It belongs to the CIA30 family. As to quaternary structure, associates with mitochondrial complex I assembly intermediates during its biogenesis.

It is found in the mitochondrion. Chaperone protein involved in the assembly of the mitochondrial NADH:ubiquinone oxidoreductase complex (complex I). This is Complex I intermediate-associated protein 30, mitochondrial from Drosophila melanogaster (Fruit fly).